The chain runs to 547 residues: Chaperonin GroEL (547 aa).

Residues 30–33, Lys-51, 87–91, Gly-415, 479–481, and Asp-495 contribute to the ATP site; these read TLGP, DGTTT, and NAA. Residues 526–547 form a disordered region; sequence KKDEPTPPAAGGGMGGMGGMDF. Positions 535–547 are enriched in gly residues; that stretch reads AGGGMGGMGGMDF.

It belongs to the chaperonin (HSP60) family. As to quaternary structure, forms a cylinder of 14 subunits composed of two heptameric rings stacked back-to-back. Interacts with the co-chaperonin GroES.

It is found in the cytoplasm. The enzyme catalyses ATP + H2O + a folded polypeptide = ADP + phosphate + an unfolded polypeptide.. In terms of biological role, together with its co-chaperonin GroES, plays an essential role in assisting protein folding. The GroEL-GroES system forms a nano-cage that allows encapsulation of the non-native substrate proteins and provides a physical environment optimized to promote and accelerate protein folding. The protein is Chaperonin GroEL of Xylella fastidiosa (strain M12).